A 209-amino-acid polypeptide reads, in one-letter code: Large ribosomal subunit protein uL4 (209 aa).

It belongs to the universal ribosomal protein uL4 family. As to quaternary structure, part of the 50S ribosomal subunit.

One of the primary rRNA binding proteins, this protein initially binds near the 5'-end of the 23S rRNA. It is important during the early stages of 50S assembly. It makes multiple contacts with different domains of the 23S rRNA in the assembled 50S subunit and ribosome. In terms of biological role, forms part of the polypeptide exit tunnel. This is Large ribosomal subunit protein uL4 from Borrelia duttonii (strain Ly).